A 475-amino-acid chain; its full sequence is Glutamate--tRNA ligase 1 (475 aa).

The 'HIGH' region motif lies at 11 to 21 (PSPTGYLHIGG). A 'KMSKS' region motif is present at residues 240–244 (KLSKR). Position 243 (Lys243) interacts with ATP.

It belongs to the class-I aminoacyl-tRNA synthetase family. Glutamate--tRNA ligase type 1 subfamily. In terms of assembly, monomer.

Its subcellular location is the cytoplasm. It catalyses the reaction tRNA(Glu) + L-glutamate + ATP = L-glutamyl-tRNA(Glu) + AMP + diphosphate. Its function is as follows. Catalyzes the attachment of glutamate to tRNA(Glu) in a two-step reaction: glutamate is first activated by ATP to form Glu-AMP and then transferred to the acceptor end of tRNA(Glu). This Methylobacterium radiotolerans (strain ATCC 27329 / DSM 1819 / JCM 2831 / NBRC 15690 / NCIMB 10815 / 0-1) protein is Glutamate--tRNA ligase 1.